Reading from the N-terminus, the 456-residue chain is MQPATDTIAAIATAPGQAGVGIVRVSGPRAMAIARTMLGFEPKPRYAHYGPFRDRQGELIDEGIGLYFPNPHSFTGEDVFELQGHGGTVILDILLREVCSLGARLARPGEFSERAFLNDKLDLAQAEAIADLIESSSEQAARCAVRSMQGVFSKRVDNLVEAITHLRIYVEAAIDFPEEEIDFLADGKVASDLQGLLEQVQQILGEAQQGTILRDGMKVVIAGRPNAGKSSLLNALAGREAAIVTAIEGTTRDVLREHIHIDGMPLHIIDTAGLRDSPDEVEQIGIARAWEEIRQADRILLMVDATTTDKTEPHEIWPDFIDQLPRSAPVTVIRNKVDLSGEPLGISAESHQTAPVIRLAAKAAEGLEVLREHLKECIGFASTTEGGFLARRRHLDALERARDSLLQGQTQLEGYGAGELLAEDLRAAQDALGEITGHLTPDELLGKIFSSFCIGK.

Arg-24, Glu-81, and Lys-120 together coordinate (6S)-5-formyl-5,6,7,8-tetrahydrofolate. Residues 216 to 379 (GMKVVIAGRP…LREHLKECIG (164 aa)) enclose the TrmE-type G domain. K(+) is bound at residue Asn-226. GTP contacts are provided by residues 226 to 231 (NAGKSS), 245 to 251 (TAIEGTT), and 270 to 273 (DTAG). Ser-230 contacts Mg(2+). 3 residues coordinate K(+): Thr-245, Ile-247, and Thr-250. Residue Thr-251 participates in Mg(2+) binding. A (6S)-5-formyl-5,6,7,8-tetrahydrofolate-binding site is contributed by Lys-456.

The protein belongs to the TRAFAC class TrmE-Era-EngA-EngB-Septin-like GTPase superfamily. TrmE GTPase family. Homodimer. Heterotetramer of two MnmE and two MnmG subunits. K(+) is required as a cofactor.

Its subcellular location is the cytoplasm. Functionally, exhibits a very high intrinsic GTPase hydrolysis rate. Involved in the addition of a carboxymethylaminomethyl (cmnm) group at the wobble position (U34) of certain tRNAs, forming tRNA-cmnm(5)s(2)U34. In Marinobacter nauticus (strain ATCC 700491 / DSM 11845 / VT8) (Marinobacter aquaeolei), this protein is tRNA modification GTPase MnmE.